The primary structure comprises 226 residues: Transmembrane gamma-carboxyglutamic acid protein 4 (226 aa).

An N-terminal signal peptide occupies residues Met-1–Ala-17. The propeptide occupies Val-18–Arg-49. The Extracellular segment spans residues Leu-50–Asp-113. Residues Asn-52–Ile-98 enclose the Gla domain. Cys-69 and Cys-74 are oxidised to a cystine. A 4-carboxyglutamate modification is found at Glu-72. A helical transmembrane segment spans residues Val-114 to Val-134. Over Gly-135 to His-226 the chain is Cytoplasmic. Ser-164 carries the post-translational modification Phosphoserine. An LPXY motif; mediates binding to WW domain-containing proteins motif is present at residues Leu-186–Tyr-189. A PPXY motif; mediates binding to WW domain-containing proteins motif is present at residues Pro-204 to Tyr-207.

Belongs to the commissureless family. In terms of assembly, interacts (via cytoplasmic domain) with WW domain-containing proteins MAGI1, MAGI3, NEDD4, NEDD4L, WWTR1/TAZ and YAP1. Gamma-carboxyglutamate residues are formed by vitamin K dependent carboxylation. These residues are essential for the binding of calcium.

The protein localises to the endoplasmic reticulum-Golgi intermediate compartment membrane. It is found in the cell membrane. Functionally, may control axon guidance across the CNS. Prevents the delivery of ROBO1 at the cell surface and down-regulates its expression. This chain is Transmembrane gamma-carboxyglutamic acid protein 4 (Prrg4), found in Mus musculus (Mouse).